A 259-amino-acid polypeptide reads, in one-letter code: Gasdermin bGSDM (259 aa).

A lipid anchor (S-palmitoyl cysteine) is attached at cysteine 3. Transmembrane regions (beta stranded) follow at residues 70–86, 98–116, 162–179, and 187–203; these read FQFR…AASV, SGSF…IQLS, GIRI…DLSA, and AKAK…SYAF. The tract at residues 244 to 259 is C-terminal region; the sequence is PFAFIGDDAFVDLPES.

The protein belongs to the bacterial gasdermin family. As to quaternary structure, monomer in solution. In terms of assembly, forms large, homooligomeric ring-shaped pores when inserted in membranes. Palmitoylation helps stabilize the inactive state; may self palmitoylate. Palmitoylation plays a significant role in pore formation.

It localises to the cytoplasm. The protein resides in the cell inner membrane. Its activity is regulated as follows. The full-length protein before cleavage is inactive: intramolecular interactions between the N-terminal domain and the C-terminal region as well as the lipid modification, mediate autoinhibition. The pyroptosis-like-inducing activity is carried by the released N-terminal domain (Gasdermin bGSDM, N-terminus). In terms of biological role, precursor of a pore-forming protein involved in defense against bacteriophages. Expression of bGSDM and the neighboring protease gene (Ga0098714_109514) is toxic in E.coli on solid medium. Cleavage of this precursor by its dedicated protease releases the active moiety (gasdermin bGSDM, N-terminus) which inserts into membranes, forming pores and triggering cell death. Its function is as follows. Pore-forming protein that causes membrane permeabilization via a pyroptosis-like activity. Makes ring-like pores when released. This is Gasdermin bGSDM from Bradyrhizobium tropiciagri.